Reading from the N-terminus, the 692-residue chain is MEARYVDLDKLRNIGIMAHIDAGKTTTTERILYYTGRKHFIGDVDEGNTTTDWMPQEKERGITIQSAATTCFWKGYRINIIDTPGHVDFTAEVERALRVLDGAIAVFDATAGVEPQSETVWRQADKYNVPRIAFMNKMDKVGADFYMAVETLVTKLRANPIPVQMPIGSEKDFQGVIDLIKMKAIYWVSEDGSVYEERDIPEELREEAEMRREEMLEKIAELDEEILEKYLEGEEISEEEIKRVLRKATIENKAVPVLCGAAKANKGIQPLLDAVIDYLPSPLDLPPVKGWRVSDGEVVYRKPDENEPFTALVFKVQVDPYIGKLVYFRVYSGRLEKGSYVYNSTKGQRERISRIVFMHADKREEVDYVRPGDIAAGVGLKVSQTGDTLCDEKEPIILEKIDFPEPVISLAVEPVTKADEEKLVKALLALSEEDPTLQVRVDKETGETIISGMGELHLEIVVDRLKREFGVNVRVGQPQVAYRETIKKSAEAEGKYIRQTGGRGQYGHVILRIEPIPEEEGKNFEFIDKTVGGVIPKEFMPAIEAGIKEAMMAGPLAGYPVVRVRAIVLDGSYHEVDSSEMAFKIAASMAFKEAMKKAQPVLLEPIMKLEITTPEEYMGNIISDLNSRRAKVESLETRGHLKVIVAKVPLSETFGYATVLRSLSQGRASYIMQFSHYQEVPEKIAEKIIKVV.

A tr-type G domain is found at 9–283; the sequence is DKLRNIGIMA…AVIDYLPSPL (275 aa). Residues 18–25, 82–86, and 136–139 each bind GTP; these read AHIDAGKT, DTPGH, and NKMD.

Belongs to the TRAFAC class translation factor GTPase superfamily. Classic translation factor GTPase family. EF-G/EF-2 subfamily.

It is found in the cytoplasm. In terms of biological role, catalyzes the GTP-dependent ribosomal translocation step during translation elongation. During this step, the ribosome changes from the pre-translocational (PRE) to the post-translocational (POST) state as the newly formed A-site-bound peptidyl-tRNA and P-site-bound deacylated tRNA move to the P and E sites, respectively. Catalyzes the coordinated movement of the two tRNA molecules, the mRNA and conformational changes in the ribosome. In Thermotoga maritima (strain ATCC 43589 / DSM 3109 / JCM 10099 / NBRC 100826 / MSB8), this protein is Elongation factor G (fusA).